Here is a 246-residue protein sequence, read N- to C-terminus: NAD(P)H-quinone oxidoreductase subunit K (246 aa).

[4Fe-4S] cluster-binding residues include C62, C63, C127, and C158.

It belongs to the complex I 20 kDa subunit family. In terms of assembly, NDH-1 can be composed of about 15 different subunits; different subcomplexes with different compositions have been identified which probably have different functions. It depends on [4Fe-4S] cluster as a cofactor.

Its subcellular location is the cellular thylakoid membrane. The enzyme catalyses a plastoquinone + NADH + (n+1) H(+)(in) = a plastoquinol + NAD(+) + n H(+)(out). The catalysed reaction is a plastoquinone + NADPH + (n+1) H(+)(in) = a plastoquinol + NADP(+) + n H(+)(out). Its function is as follows. NDH-1 shuttles electrons from an unknown electron donor, via FMN and iron-sulfur (Fe-S) centers, to quinones in the respiratory and/or the photosynthetic chain. The immediate electron acceptor for the enzyme in this species is believed to be plastoquinone. Couples the redox reaction to proton translocation, and thus conserves the redox energy in a proton gradient. Cyanobacterial NDH-1 also plays a role in inorganic carbon-concentration. This Parasynechococcus marenigrum (strain WH8102) protein is NAD(P)H-quinone oxidoreductase subunit K.